The sequence spans 356 residues: sn-glycerol-3-phosphate import ATP-binding protein UgpC (356 aa).

The 232-residue stretch at 4-235 (LKLQAVTKSW…PASRFVASFI (232 aa)) folds into the ABC transporter domain. 37–44 (GPSGCGKS) lines the ATP pocket.

This sequence belongs to the ABC transporter superfamily. sn-glycerol-3-phosphate importer (TC 3.A.1.1.3) family. As to quaternary structure, the complex is composed of two ATP-binding proteins (UgpC), two transmembrane proteins (UgpA and UgpE) and a solute-binding protein (UgpB).

It localises to the cell inner membrane. The enzyme catalyses sn-glycerol 3-phosphate(out) + ATP + H2O = sn-glycerol 3-phosphate(in) + ADP + phosphate + H(+). In terms of biological role, part of the ABC transporter complex UgpBAEC involved in sn-glycerol-3-phosphate (G3P) import. Responsible for energy coupling to the transport system. The sequence is that of sn-glycerol-3-phosphate import ATP-binding protein UgpC from Salmonella typhimurium (strain LT2 / SGSC1412 / ATCC 700720).